Reading from the N-terminus, the 264-residue chain is UPF0162 protein PM0557 (264 aa).

The protein belongs to the UPF0162 family.

This Pasteurella multocida (strain Pm70) protein is UPF0162 protein PM0557.